We begin with the raw amino-acid sequence, 313 residues long: Protein-methionine-sulfoxide reductase catalytic subunit MsrP (313 aa).

Positions 1–44 (MARWRPDMAEREATPEALYLRRRDFLALGAAGAVGLLLPRGARA) form a signal peptide, tat-type signal. Residues N76, 79-80 (YE), C134, T169, N217, R222, and 233-235 (GAK) each bind Mo-molybdopterin.

This sequence belongs to the MsrP family. Heterodimer of a catalytic subunit (MsrP) and a heme-binding subunit (MsrQ). Mo-molybdopterin is required as a cofactor. Predicted to be exported by the Tat system. The position of the signal peptide cleavage has not been experimentally proven.

Its subcellular location is the periplasm. The enzyme catalyses L-methionyl-[protein] + a quinone + H2O = L-methionyl-(S)-S-oxide-[protein] + a quinol. The catalysed reaction is L-methionyl-[protein] + a quinone + H2O = L-methionyl-(R)-S-oxide-[protein] + a quinol. Part of the MsrPQ system that repairs oxidized periplasmic proteins containing methionine sulfoxide residues (Met-O), using respiratory chain electrons. Thus protects these proteins from oxidative-stress damage caused by reactive species of oxygen and chlorine generated by the host defense mechanisms. MsrPQ is essential for the maintenance of envelope integrity under bleach stress, rescuing a wide series of structurally unrelated periplasmic proteins from methionine oxidation. The catalytic subunit MsrP is non-stereospecific, being able to reduce both (R-) and (S-) diastereoisomers of methionine sulfoxide. The protein is Protein-methionine-sulfoxide reductase catalytic subunit MsrP of Anaeromyxobacter dehalogenans (strain 2CP-1 / ATCC BAA-258).